The sequence spans 101 residues: Small ribosomal subunit protein bS18c (101 aa).

The protein belongs to the bacterial ribosomal protein bS18 family. Part of the 30S ribosomal subunit.

Its subcellular location is the plastid. The protein localises to the chloroplast. This chain is Small ribosomal subunit protein bS18c, found in Aethionema cordifolium (Lebanon stonecress).